A 397-amino-acid chain; its full sequence is Succinyl-diaminopimelate desuccinylase (397 aa).

Residue H73 participates in Zn(2+) binding. The active site involves D75. Zn(2+) is bound at residue D106. Residue E140 is the Proton acceptor of the active site. The Zn(2+) site is built by E141, E169, and H366.

Belongs to the peptidase M20A family. DapE subfamily. In terms of assembly, homodimer. Requires Zn(2+) as cofactor. Co(2+) serves as cofactor.

It catalyses the reaction N-succinyl-(2S,6S)-2,6-diaminopimelate + H2O = (2S,6S)-2,6-diaminopimelate + succinate. It functions in the pathway amino-acid biosynthesis; L-lysine biosynthesis via DAP pathway; LL-2,6-diaminopimelate from (S)-tetrahydrodipicolinate (succinylase route): step 3/3. Its function is as follows. Catalyzes the hydrolysis of N-succinyl-L,L-diaminopimelic acid (SDAP), forming succinate and LL-2,6-diaminopimelate (DAP), an intermediate involved in the bacterial biosynthesis of lysine and meso-diaminopimelic acid, an essential component of bacterial cell walls. In Rhizobium johnstonii (strain DSM 114642 / LMG 32736 / 3841) (Rhizobium leguminosarum bv. viciae), this protein is Succinyl-diaminopimelate desuccinylase.